The following is a 286-amino-acid chain: MYLQDVIMKLNEFWASRGCLLEQPYDLEVGAGTFHPATFFGSLRKGPWKVAYVQPSRRPTDGRYGENPNRLQRYFQYQVIIKPSPENSQELYLESLEYLGVNLREHDIRFVEDNWESPTLGAWGVGWEVWLDGMEITQFTYFQQIGGISLREIPLEITYGLERIAMYLQGVDNVFEVKWNEHVKYGDVFLENEREFSFFNFEEANVELLFRHFDEFESEFYRLIEKKLYLPAYDYVLKCSHTFNLLDARGAISVSQRQTYVKRIQAMARKVARVFLEVQEHENSPA.

Belongs to the class-II aminoacyl-tRNA synthetase family. As to quaternary structure, tetramer of two alpha and two beta subunits.

The protein resides in the cytoplasm. It catalyses the reaction tRNA(Gly) + glycine + ATP = glycyl-tRNA(Gly) + AMP + diphosphate. This Thermotoga neapolitana (strain ATCC 49049 / DSM 4359 / NBRC 107923 / NS-E) protein is Glycine--tRNA ligase alpha subunit.